Reading from the N-terminus, the 568-residue chain is Urease subunit alpha (568 aa).

The Urease domain maps to 130 to 568 (GGIDSHIHFI…LPMAQRYFLF (439 aa)). Residues histidine 135, histidine 137, and lysine 218 each contribute to the Ni(2+) site. N6-carboxylysine is present on lysine 218. Residue histidine 220 coordinates substrate. Ni(2+) is bound by residues histidine 247 and histidine 273. The Proton donor role is filled by histidine 321. Aspartate 361 serves as a coordination point for Ni(2+).

It belongs to the metallo-dependent hydrolases superfamily. Urease alpha subunit family. In terms of assembly, heterotrimer of UreA (gamma), UreB (beta) and UreC (alpha) subunits. Three heterotrimers associate to form the active enzyme. It depends on Ni cation as a cofactor. In terms of processing, carboxylation allows a single lysine to coordinate two nickel ions.

The protein localises to the cytoplasm. It catalyses the reaction urea + 2 H2O + H(+) = hydrogencarbonate + 2 NH4(+). The protein operates within nitrogen metabolism; urea degradation; CO(2) and NH(3) from urea (urease route): step 1/1. This chain is Urease subunit alpha, found in Nitrosospira multiformis (strain ATCC 25196 / NCIMB 11849 / C 71).